A 1042-amino-acid polypeptide reads, in one-letter code: Isoleucine--tRNA ligase (1042 aa).

Positions 48 to 58 (PFATGLPHFGH) match the 'HIGH' region motif. Residues 594 to 598 (KMSKS) carry the 'KMSKS' region motif. ATP is bound at residue Lys597.

It belongs to the class-I aminoacyl-tRNA synthetase family. IleS type 2 subfamily. As to quaternary structure, monomer. It depends on Zn(2+) as a cofactor.

It is found in the cytoplasm. It carries out the reaction tRNA(Ile) + L-isoleucine + ATP = L-isoleucyl-tRNA(Ile) + AMP + diphosphate. Catalyzes the attachment of isoleucine to tRNA(Ile). As IleRS can inadvertently accommodate and process structurally similar amino acids such as valine, to avoid such errors it has two additional distinct tRNA(Ile)-dependent editing activities. One activity is designated as 'pretransfer' editing and involves the hydrolysis of activated Val-AMP. The other activity is designated 'posttransfer' editing and involves deacylation of mischarged Val-tRNA(Ile). This is Isoleucine--tRNA ligase from Borreliella burgdorferi (strain ZS7) (Borrelia burgdorferi).